Consider the following 76-residue polypeptide: Protein OPG128 (76 aa).

Cysteine 17 and cysteine 21 are oxidised to a cystine.

Belongs to the orthopoxvirus OPG128 family. As to quaternary structure, interacts with sulfhydryl oxidase OPG072; this interaction involves formation of a transient disulfide-bonded intermediate, allowing disulfide bond transfer. Interacts with OPG088; this interaction involves formation of a transient disulfide-bonded intermediate, allowing disulfide bond transfer.

In terms of biological role, late protein which probably participates in disulfide bond formation by functioning as a thiol-disulfide transfer protein between membrane-associated OPG072 and OPG08. The complete pathway for formation of disulfide bonds in intracellular virion membrane proteins sequentially involves oxidation of OPG072, OPG128 and OPG08. This chain is Protein OPG128 (OPG128), found in Variola virus (isolate Human/India/Ind3/1967) (VARV).